Consider the following 622-residue polypeptide: Auxin response factor 11 (622 aa).

The TF-B3 DNA-binding region spans 145–247; sequence FVKILTASDT…DLRVGVRRLA (103 aa). Disordered regions lie at residues 358-398 and 483-513; these read SIQR…ISEI and SNIS…TRSR. Composition is skewed to polar residues over residues 376–387 and 483–511; these read SALTPTPTQQQS and SNIS…TSTR. The PB1 domain occupies 511–594; the sequence is RSRIKVQMQG…KKLFIYPSDE (84 aa).

Belongs to the ARF family. As to quaternary structure, homodimers and heterodimers.

It localises to the nucleus. Auxin response factors (ARFs) are transcriptional factors that bind specifically to the DNA sequence 5'-TGTCTC-3' found in the auxin-responsive promoter elements (AuxREs). Could act as transcriptional activator or repressor. Formation of heterodimers with Aux/IAA proteins may alter their ability to modulate early auxin response genes expression. In Arabidopsis thaliana (Mouse-ear cress), this protein is Auxin response factor 11 (ARF11).